The sequence spans 528 residues: Glutamyl-tRNA(Gln) amidotransferase subunit A, mitochondrial (528 aa).

K76 serves as the catalytic Charge relay system. Residues 147-166 are disordered; the sequence is QYREKRKQNPHSKNEDSDWL. S171 functions as the Charge relay system in the catalytic mechanism. S195 serves as the catalytic Acyl-ester intermediate.

Belongs to the amidase family. GatA subfamily. In terms of assembly, subunit of the heterotrimeric GatCAB amidotransferase (AdT) complex, composed of A (QRSL1), B (GATB) and C (GATC) subunits.

It localises to the mitochondrion. It carries out the reaction L-glutamyl-tRNA(Gln) + L-glutamine + ATP + H2O = L-glutaminyl-tRNA(Gln) + L-glutamate + ADP + phosphate + H(+). Allows the formation of correctly charged Gln-tRNA(Gln) through the transamidation of misacylated Glu-tRNA(Gln) in the mitochondria. The reaction takes place in the presence of glutamine and ATP through an activated gamma-phospho-Glu-tRNA(Gln). In Macaca fascicularis (Crab-eating macaque), this protein is Glutamyl-tRNA(Gln) amidotransferase subunit A, mitochondrial.